A 201-amino-acid polypeptide reads, in one-letter code: Interferon-induced transmembrane protein 10 (201 aa).

Disordered stretches follow at residues 1–23 (MAQGPSQCPALLGAPASTTDGTQ) and 60–88 (AAPAPEPSASPPMAPTLFPMESKSSKTDS). Over 1–127 (MAQGPSQCPA…PDTTEVNDYY (127 aa)) the chain is Extracellular. Positions 63–73 (APEPSASPPMA) are enriched in pro residues. A helical transmembrane segment spans residues 128 to 148 (LWSIFNFVYLNFCCLGFIALA). S-palmitoyl cysteine attachment occurs at residues cysteine 140 and cysteine 141. The Cytoplasmic segment spans residues 149-173 (YSLKVRDKKLLNDLNGAVEDAKTAR). A helical transmembrane segment spans residues 174–194 (LFNITSSALAASCIILIFIFL). At 195-201 (RYPLTDY) the chain is on the extracellular side.

The protein belongs to the CD225/Dispanin family.

It is found in the cell membrane. The sequence is that of Interferon-induced transmembrane protein 10 (Ifitm10) from Mus musculus (Mouse).